We begin with the raw amino-acid sequence, 190 residues long: Peptidyl-prolyl cis-trans isomerase A (190 aa).

Residues 1–24 (MFKSTLAAMAAVFALSALSPAAMA) form the signal peptide. A PPIase cyclophilin-type domain is found at 27–188 (GDPHVLLTTS…KPVVILSAKV (162 aa)).

Belongs to the cyclophilin-type PPIase family.

Its subcellular location is the periplasm. It carries out the reaction [protein]-peptidylproline (omega=180) = [protein]-peptidylproline (omega=0). PPIases accelerate the folding of proteins. It catalyzes the cis-trans isomerization of proline imidic peptide bonds in oligopeptides. This chain is Peptidyl-prolyl cis-trans isomerase A (ppiA), found in Escherichia coli O157:H7.